A 95-amino-acid polypeptide reads, in one-letter code: Large ribosomal subunit protein bL27 (95 aa).

Residues 1–24 (MAHKKGTGSTRNGRDSNSQRLGVK) form a disordered region. The segment covering 7–20 (TGSTRNGRDSNSQR) has biased composition (polar residues).

It belongs to the bacterial ribosomal protein bL27 family.

In Trichodesmium erythraeum (strain IMS101), this protein is Large ribosomal subunit protein bL27.